Here is a 193-residue protein sequence, read N- to C-terminus: Peptidyl-tRNA hydrolase (193 aa).

TRNA is bound at residue tyrosine 18. Catalysis depends on histidine 23, which acts as the Proton acceptor. Residues phenylalanine 69, asparagine 71, and asparagine 117 each contribute to the tRNA site.

The protein belongs to the PTH family. In terms of assembly, monomer.

The protein resides in the cytoplasm. The catalysed reaction is an N-acyl-L-alpha-aminoacyl-tRNA + H2O = an N-acyl-L-amino acid + a tRNA + H(+). In terms of biological role, hydrolyzes ribosome-free peptidyl-tRNAs (with 1 or more amino acids incorporated), which drop off the ribosome during protein synthesis, or as a result of ribosome stalling. Catalyzes the release of premature peptidyl moieties from peptidyl-tRNA molecules trapped in stalled 50S ribosomal subunits, and thus maintains levels of free tRNAs and 50S ribosomes. In Teredinibacter turnerae (strain ATCC 39867 / T7901), this protein is Peptidyl-tRNA hydrolase.